The sequence spans 486 residues: UDP-N-acetylmuramate--L-alanine ligase (486 aa).

129–135 (GTHGKTT) contacts ATP.

It belongs to the MurCDEF family.

It localises to the cytoplasm. The enzyme catalyses UDP-N-acetyl-alpha-D-muramate + L-alanine + ATP = UDP-N-acetyl-alpha-D-muramoyl-L-alanine + ADP + phosphate + H(+). The protein operates within cell wall biogenesis; peptidoglycan biosynthesis. Its function is as follows. Cell wall formation. This is UDP-N-acetylmuramate--L-alanine ligase from Vibrio cholerae serotype O1 (strain ATCC 39315 / El Tor Inaba N16961).